We begin with the raw amino-acid sequence, 382 residues long: Chaperone protein DnaJ 1 (382 aa).

The J domain occupies 4-68 (DYYGILGVDR…DKRRIVDMGG (65 aa)). The CR-type zinc-finger motif lies at 134 to 216 (GAKKDLTLDT…CAGDGRVRAR (83 aa)). Residues Cys-147, Cys-150, Cys-164, Cys-167, Cys-190, Cys-193, Cys-204, and Cys-207 each coordinate Zn(2+). CXXCXGXG motif repeat units follow at residues 147–154 (CTKCHGSG), 164–171 (CGTCNGAG), 190–197 (CHTCDGTG), and 204–211 (CTECAGDG).

This sequence belongs to the DnaJ family. As to quaternary structure, homodimer. Zn(2+) serves as cofactor.

The protein resides in the cytoplasm. Functionally, participates actively in the response to hyperosmotic and heat shock by preventing the aggregation of stress-denatured proteins and by disaggregating proteins, also in an autonomous, DnaK-independent fashion. Unfolded proteins bind initially to DnaJ; upon interaction with the DnaJ-bound protein, DnaK hydrolyzes its bound ATP, resulting in the formation of a stable complex. GrpE releases ADP from DnaK; ATP binding to DnaK triggers the release of the substrate protein, thus completing the reaction cycle. Several rounds of ATP-dependent interactions between DnaJ, DnaK and GrpE are required for fully efficient folding. Also involved, together with DnaK and GrpE, in the DNA replication of plasmids through activation of initiation proteins. The sequence is that of Chaperone protein DnaJ 1 from Corynebacterium glutamicum (strain ATCC 13032 / DSM 20300 / JCM 1318 / BCRC 11384 / CCUG 27702 / LMG 3730 / NBRC 12168 / NCIMB 10025 / NRRL B-2784 / 534).